Reading from the N-terminus, the 403-residue chain is Phosphopentomutase (403 aa).

Positions 13, 298, 303, 339, 340, and 351 each coordinate Mn(2+).

This sequence belongs to the phosphopentomutase family. It depends on Mn(2+) as a cofactor.

It localises to the cytoplasm. It carries out the reaction 2-deoxy-alpha-D-ribose 1-phosphate = 2-deoxy-D-ribose 5-phosphate. It catalyses the reaction alpha-D-ribose 1-phosphate = D-ribose 5-phosphate. It participates in carbohydrate degradation; 2-deoxy-D-ribose 1-phosphate degradation; D-glyceraldehyde 3-phosphate and acetaldehyde from 2-deoxy-alpha-D-ribose 1-phosphate: step 1/2. Isomerase that catalyzes the conversion of deoxy-ribose 1-phosphate (dRib-1-P) and ribose 1-phosphate (Rib-1-P) to deoxy-ribose 5-phosphate (dRib-5-P) and ribose 5-phosphate (Rib-5-P), respectively. The polypeptide is Phosphopentomutase (Streptococcus pyogenes serotype M5 (strain Manfredo)).